A 526-amino-acid chain; its full sequence is Probable Xaa-Pro aminopeptidase GLRG_02280 (526 aa).

The Mn(2+) site is built by D285, D296, E454, and E495.

It belongs to the peptidase M24B family. Mn(2+) serves as cofactor.

The catalysed reaction is Release of any N-terminal amino acid, including proline, that is linked to proline, even from a dipeptide or tripeptide.. Its function is as follows. Catalyzes the removal of a penultimate prolyl residue from the N-termini of peptides. This Colletotrichum graminicola (strain M1.001 / M2 / FGSC 10212) (Maize anthracnose fungus) protein is Probable Xaa-Pro aminopeptidase GLRG_02280.